A 705-amino-acid polypeptide reads, in one-letter code: MEKPPSIEETPSSEPMEEEEDDDLELFGGYDSFRSYNSSVGSESSSYLEESSEAENEDREAGELPTSPLHLLSPGTPRSLDGSGSEPAVCEMCGIVGTREAFFSKTKRFCSVSCSRSYSSNSKKASILARLQGKPPTKKAKVLHKAAWSAKIGAFLHSQGTGQLADGTPTGQDALVLGFDWGKFLKDHSYKAAPVSCFKHVPLYDQWEDVMKGMKVEVLNSDAVLPSRVYWIASVIQTAGYRVLLRYEGFENDASHDFWCNLGTVDVHPIGWCAINSKILVPPRTIHAKFTDWKGYLMKRLVGSRTLPVDFHIKMVESMKYPFRQGMRLEVVDKSQVSRTRMAVVDTVIGGRLRLLYEDGDSDDDFWCHMWSPLIHPVGWSRRVGHGIKMSERRSDMAHHPTFRKIYCDAVPYLFKKVRAVYTEGGWFEEGMKLEAIDPLNLGNICVATVCKVLLDGYLMVCVDGGPSTDGSDWFCYHASSHAIFPATFCQKNDIELTPPKGYEAQTFNWENYLEKTKSKAAPSRLFNMDCPNHGFKVGMKLEAVDLMEPRLICVATVKRVVHRLLSIHFDGWDSEYDQWVDCESPDIYPVGWCELTGYQLQPPVAAEPATPLKAKEATKKKKKQFGKKRKRIPPTKTRPLRQGSKKPLLEDDPQGARKISSEPVRGDIIAVRVKEEHLDVPSPNKASSPELPVSVENIKQETDD.

The segment at 1–84 is disordered; it reads MEKPPSIEET…GTPRSLDGSG (84 aa). Ser-13 carries the post-translational modification Phosphoserine. Residues 15–25 are compositionally biased toward acidic residues; the sequence is PMEEEEDDDLE. The span at 38-49 shows a compositional bias: low complexity; the sequence is SSVGSESSSYLE. A compositionally biased stretch (acidic residues) spans 50–60; it reads ESSEAENEDRE. A Phosphoserine modification is found at Ser-67. Position 76 is a phosphothreonine (Thr-76). The FCS-type zinc-finger motif lies at 81 to 116; that stretch reads DGSGSEPAVCEMCGIVGTREAFFSKTKRFCSVSCSR. Zn(2+) is bound by residues Cys-90, Cys-93, Cys-110, and Cys-114. 4 MBT repeats span residues 179–283, 291–391, 397–500, and 508–604; these read FDWG…LVPP, TDWK…IKMS, MAHH…LTPP, and FNWE…LQPP. Ser-338 is modified (phosphoserine). Lys-405 participates in a covalent cross-link: Glycyl lysine isopeptide (Lys-Gly) (interchain with G-Cter in SUMO2). A disordered region spans residues 608–705; that stretch reads EPATPLKAKE…VENIKQETDD (98 aa). The segment covering 619–634 has biased composition (basic residues); that stretch reads TKKKKKQFGKKRKRIP. Residues Lys-647, Lys-659, and Lys-675 each participate in a glycyl lysine isopeptide (Lys-Gly) (interchain with G-Cter in SUMO2) cross-link. Phosphoserine is present on residues Ser-683, Ser-688, and Ser-689. Lys-700 participates in a covalent cross-link: Glycyl lysine isopeptide (Lys-Gly) (interchain with G-Cter in SUMO1); alternate. Residue Lys-700 forms a Glycyl lysine isopeptide (Lys-Gly) (interchain with G-Cter in SUMO2); alternate linkage.

As to quaternary structure, part of the E2F6.com-1 complex in G0 phase composed of E2F6, MGA, MAX, TFDP1, CBX3, BAT8, EUHMTASE1, RING1, RNF2, MBLR, BAT8 and YAF2.

It is found in the nucleus. Functionally, putative Polycomb group (PcG) protein. PcG proteins maintain the transcriptionally repressive state of genes, probably via a modification of chromatin, rendering it heritably changed in its expressibility. Its association with a chromatin-remodeling complex suggests that it may contribute to prevent expression of genes that trigger the cell into mitosis. Binds to monomethylated and dimethylated 'Lys-20' on histone H4. Binds histone H3 peptides that are monomethylated or dimethylated on 'Lys-4', 'Lys-9' or 'Lys-27'. The protein is Lethal(3)malignant brain tumor-like protein 2 (L3MBTL2) of Pongo abelii (Sumatran orangutan).